We begin with the raw amino-acid sequence, 1431 residues long: Protein CFT1 (1431 aa).

A disordered region spans residues 721–759; the sequence is EPSKSESSEPISHQIDSENKPNITNGINGTTARSARQTQ. The segment covering 740–759 has biased composition (polar residues); that stretch reads KPNITNGINGTTARSARQTQ.

It belongs to the CFT1 family.

It localises to the nucleus. Its function is as follows. RNA-binding component of the cleavage and polyadenylation factor (CPF) complex, which plays a key role in polyadenylation-dependent pre-mRNA 3'-end formation and cooperates with cleavage factors including the CFIA complex and NAB4/CFIB. Involved in poly(A) site recognition. May be involved in coupling transcription termination and mRNA 3'-end formation. The polypeptide is Protein CFT1 (CFT1) (Cryptococcus neoformans var. neoformans serotype D (strain B-3501A) (Filobasidiella neoformans)).